A 424-amino-acid chain; its full sequence is Enolase (424 aa).

Gln162 contacts (2R)-2-phosphoglycerate. Glu204 (proton donor) is an active-site residue. Mg(2+)-binding residues include Asp241, Glu284, and Asp311. Residues Lys336, Arg365, Ser366, and Lys387 each coordinate (2R)-2-phosphoglycerate. Lys336 functions as the Proton acceptor in the catalytic mechanism.

This sequence belongs to the enolase family. The cofactor is Mg(2+).

It is found in the cytoplasm. The protein resides in the secreted. Its subcellular location is the cell surface. It catalyses the reaction (2R)-2-phosphoglycerate = phosphoenolpyruvate + H2O. The protein operates within carbohydrate degradation; glycolysis; pyruvate from D-glyceraldehyde 3-phosphate: step 4/5. Catalyzes the reversible conversion of 2-phosphoglycerate (2-PG) into phosphoenolpyruvate (PEP). It is essential for the degradation of carbohydrates via glycolysis. The sequence is that of Enolase from Sinorhizobium medicae (strain WSM419) (Ensifer medicae).